Here is a 391-residue protein sequence, read N- to C-terminus: Terminal nucleotidyltransferase 5C (391 aa).

It belongs to the TENT family. In terms of assembly, interacts with BCCIP and PABPC1; the interaction has no effect on TENT5C poly(A) polymerase function. Interacts with PLK4; this interaction leads to the TENT5C recruitment into the centrosome. Expressed by splenocytes, expression is increased in activated splenocytes.

It localises to the nucleus. The protein localises to the cytoplasm. It is found in the cytoskeleton. Its subcellular location is the microtubule organizing center. The protein resides in the centrosome. The enzyme catalyses RNA(n) + ATP = RNA(n)-3'-adenine ribonucleotide + diphosphate. Catalyzes the transfer of one adenosine molecule from an ATP to an mRNA poly(A) tail bearing a 3'-OH terminal group and enhances mRNA stability and gene expression. Can also elongate RNA oligos ending with uridine molecule, provided that the sequence is adenosine-rich. Mainly targets mRNAs encoding endoplasmic reticulum-targeted protein. The protein is Terminal nucleotidyltransferase 5C of Mus musculus (Mouse).